The chain runs to 71 residues: Large ribosomal subunit protein bL31 (71 aa).

The Zn(2+) site is built by cysteine 16, cysteine 18, cysteine 36, and cysteine 39.

Belongs to the bacterial ribosomal protein bL31 family. Type A subfamily. As to quaternary structure, part of the 50S ribosomal subunit. It depends on Zn(2+) as a cofactor.

Binds the 23S rRNA. The chain is Large ribosomal subunit protein bL31 from Thermotoga sp. (strain RQ2).